A 202-amino-acid polypeptide reads, in one-letter code: Crossover junction endodeoxyribonuclease RuvC (202 aa).

Residues D7, E68, and D141 contribute to the active site. 3 residues coordinate Mg(2+): D7, E68, and D141.

Belongs to the RuvC family. In terms of assembly, homodimer which binds Holliday junction (HJ) DNA. The HJ becomes 2-fold symmetrical on binding to RuvC with unstacked arms; it has a different conformation from HJ DNA in complex with RuvA. In the full resolvosome a probable DNA-RuvA(4)-RuvB(12)-RuvC(2) complex forms which resolves the HJ. Mg(2+) serves as cofactor.

The protein localises to the cytoplasm. The enzyme catalyses Endonucleolytic cleavage at a junction such as a reciprocal single-stranded crossover between two homologous DNA duplexes (Holliday junction).. Functionally, the RuvA-RuvB-RuvC complex processes Holliday junction (HJ) DNA during genetic recombination and DNA repair. Endonuclease that resolves HJ intermediates. Cleaves cruciform DNA by making single-stranded nicks across the HJ at symmetrical positions within the homologous arms, yielding a 5'-phosphate and a 3'-hydroxyl group; requires a central core of homology in the junction. The consensus cleavage sequence is 5'-(A/T)TT(C/G)-3'. Cleavage occurs on the 3'-side of the TT dinucleotide at the point of strand exchange. HJ branch migration catalyzed by RuvA-RuvB allows RuvC to scan DNA until it finds its consensus sequence, where it cleaves and resolves the cruciform DNA. In Clavibacter michiganensis subsp. michiganensis (strain NCPPB 382), this protein is Crossover junction endodeoxyribonuclease RuvC.